Consider the following 422-residue polypeptide: Glycine amidinotransferase, mitochondrial (422 aa).

Residues 1 to 37 (MLRVRCLRGGSRGAEAVHYIGSMLRKSFVGWVQRSFQ) constitute a mitochondrion transit peptide. Residues aspartate 253 and histidine 302 contribute to the active site. Cysteine 406 serves as the catalytic Amidino-cysteine intermediate.

Belongs to the amidinotransferase family. In terms of assembly, homodimer. Ubiquitously expressed in adult tissues, with highest levels in muscle and intermediate levels in eye, heart, liver, stomach and testis. In stage 28 embryos, expression is higher in the dorsal and ventral parts of the trunk than in the head. In middle gastrulae, expression is highest around the yolk plug, while in stage 15 and tailbud stage embryos, expression is largely restricted to the region around the presumptive notochord and gut.

It localises to the mitochondrion inner membrane. It catalyses the reaction L-arginine + glycine = guanidinoacetate + L-ornithine. Its pathway is amine and polyamine biosynthesis; creatine biosynthesis; creatine from L-arginine and glycine: step 1/2. Its function is as follows. Catalyzes the biosynthesis of guanidinoacetate, the immediate precursor of creatine. Creatine plays a vital role in energy metabolism in muscle tissues. May play a role in embryonic and central nervous system development. In Xenopus laevis (African clawed frog), this protein is Glycine amidinotransferase, mitochondrial.